A 472-amino-acid chain; its full sequence is Ribosomal protein uS12 methylthiotransferase RimO (472 aa).

Residues 33–143 (NRIGFVSLGC…VLKHVHKYVP (111 aa)) enclose the MTTase N-terminal domain. [4Fe-4S] cluster-binding residues include Cys42, Cys78, Cys107, Cys175, Cys179, and Cys182. One can recognise a Radical SAM core domain in the interval 161 to 398 (LTPKHYAYLK…MEVQAEISAE (238 aa)). Positions 401–467 (ARFVGRTLDI…EHDLWAEVVD (67 aa)) constitute a TRAM domain.

This sequence belongs to the methylthiotransferase family. RimO subfamily. [4Fe-4S] cluster serves as cofactor.

It is found in the cytoplasm. The catalysed reaction is L-aspartate(89)-[ribosomal protein uS12]-hydrogen + (sulfur carrier)-SH + AH2 + 2 S-adenosyl-L-methionine = 3-methylsulfanyl-L-aspartate(89)-[ribosomal protein uS12]-hydrogen + (sulfur carrier)-H + 5'-deoxyadenosine + L-methionine + A + S-adenosyl-L-homocysteine + 2 H(+). In terms of biological role, catalyzes the methylthiolation of an aspartic acid residue of ribosomal protein uS12. The protein is Ribosomal protein uS12 methylthiotransferase RimO of Shewanella baltica (strain OS185).